The primary structure comprises 448 residues: Phosphoglucosamine mutase (448 aa).

Residue serine 102 is the Phosphoserine intermediate of the active site. The Mg(2+) site is built by serine 102, aspartate 243, aspartate 245, and aspartate 247. A Phosphoserine modification is found at serine 102.

This sequence belongs to the phosphohexose mutase family. It depends on Mg(2+) as a cofactor. Activated by phosphorylation.

It catalyses the reaction alpha-D-glucosamine 1-phosphate = D-glucosamine 6-phosphate. Its function is as follows. Catalyzes the conversion of glucosamine-6-phosphate to glucosamine-1-phosphate. This is Phosphoglucosamine mutase from Parvibaculum lavamentivorans (strain DS-1 / DSM 13023 / NCIMB 13966).